A 369-amino-acid polypeptide reads, in one-letter code: Tetraacyldisaccharide 4'-kinase (369 aa).

Position 68 to 75 (68 to 75 (VVGGTGKT)) interacts with ATP.

This sequence belongs to the LpxK family.

It carries out the reaction a lipid A disaccharide + ATP = a lipid IVA + ADP + H(+). The protein operates within glycolipid biosynthesis; lipid IV(A) biosynthesis; lipid IV(A) from (3R)-3-hydroxytetradecanoyl-[acyl-carrier-protein] and UDP-N-acetyl-alpha-D-glucosamine: step 6/6. In terms of biological role, transfers the gamma-phosphate of ATP to the 4'-position of a tetraacyldisaccharide 1-phosphate intermediate (termed DS-1-P) to form tetraacyldisaccharide 1,4'-bis-phosphate (lipid IVA). This is Tetraacyldisaccharide 4'-kinase from Chlamydia trachomatis serovar D (strain ATCC VR-885 / DSM 19411 / UW-3/Cx).